The sequence spans 63 residues: 2-hydroxymuconate tautomerase (63 aa).

P2 serves as the catalytic Proton acceptor; via imino nitrogen.

It belongs to the 4-oxalocrotonate tautomerase family. In terms of assembly, homohexamer.

The enzyme catalyses (2Z,4E)-2-hydroxyhexa-2,4-dienedioate = (3E)-2-oxohex-3-enedioate. Its pathway is aromatic compound metabolism; salicylate degradation. In terms of biological role, catalyzes the ketonization of 2-hydroxymuconate stereoselectively to yield 2-oxo-3-hexenedioate. This chain is 2-hydroxymuconate tautomerase (aphI), found in Comamonas testosteroni (Pseudomonas testosteroni).